The chain runs to 355 residues: Protein RecA (355 aa).

Position 73–80 (73–80) interacts with ATP; that stretch reads GPESSGKT.

This sequence belongs to the RecA family.

The protein resides in the cytoplasm. Its function is as follows. Can catalyze the hydrolysis of ATP in the presence of single-stranded DNA, the ATP-dependent uptake of single-stranded DNA by duplex DNA, and the ATP-dependent hybridization of homologous single-stranded DNAs. It interacts with LexA causing its activation and leading to its autocatalytic cleavage. This Solidesulfovibrio magneticus (strain ATCC 700980 / DSM 13731 / RS-1) (Desulfovibrio magneticus) protein is Protein RecA.